A 274-amino-acid chain; its full sequence is MTEFTTLLQQGNAWFFIPSAILLGALHGLEPGHSKTMMAAFIIAIKGTIKQAVMLGLAATISHTAVVWLIAFGGMVISKRFTAQSAEPWLQLISAVIIIGTAFWMFWRTWRGERNWLENMHEYDYEHHHHDHEDHHDHGHHHHHEHGEYQDAHARAHANDIKRRFDGREVTNWQILLFGLTGGLIPCPAAITVLLICIQLKALTLGATLVVSFSIGLALTLVTVGVGAAISVQQVAKRWSGFNTLAKRAPYFSSLLIGLVGVYMGVHGFMGIMR.

At 1-12 (MTEFTTLLQQGN) the chain is on the periplasmic side. The helical transmembrane segment at 13–33 (AWFFIPSAILLGALHGLEPGH) threads the bilayer. The Cytoplasmic portion of the chain corresponds to 34 to 56 (SKTMMAAFIIAIKGTIKQAVMLG). The helical transmembrane segment at 57–77 (LAATISHTAVVWLIAFGGMVI) threads the bilayer. The Periplasmic segment spans residues 78-86 (SKRFTAQSA). A helical transmembrane segment spans residues 87–107 (EPWLQLISAVIIIGTAFWMFW). Residues 108-174 (RTWRGERNWL…FDGREVTNWQ (67 aa)) are Cytoplasmic-facing. Positions 130 to 149 (HDHEDHHDHGHHHHHEHGEY) are disordered. A helical transmembrane segment spans residues 175-195 (ILLFGLTGGLIPCPAAITVLL). The Periplasmic segment spans residues 196–209 (ICIQLKALTLGATL). Residues 210–230 (VVSFSIGLALTLVTVGVGAAI) traverse the membrane as a helical segment. At 231-251 (SVQQVAKRWSGFNTLAKRAPY) the chain is on the cytoplasmic side. The helical transmembrane segment at 252-272 (FSSLLIGLVGVYMGVHGFMGI) threads the bilayer. Residues 273-274 (MR) are Periplasmic-facing.

It belongs to the NiCoT transporter (TC 2.A.52) family. RcnA subfamily.

It localises to the cell inner membrane. In terms of biological role, efflux system for nickel and cobalt. This is Nickel/cobalt efflux system RcnA (rcnA) from Shigella sonnei (strain Ss046).